Consider the following 304-residue polypeptide: Coenzyme PQQ synthesis protein B (304 aa).

Belongs to the PqqB family.

It participates in cofactor biosynthesis; pyrroloquinoline quinone biosynthesis. Its function is as follows. May be involved in the transport of PQQ or its precursor to the periplasm. This Stutzerimonas stutzeri (Pseudomonas stutzeri) protein is Coenzyme PQQ synthesis protein B.